A 237-amino-acid polypeptide reads, in one-letter code: N-(5'-phosphoribosyl)anthranilate isomerase (237 aa).

Belongs to the TrpF family.

The enzyme catalyses N-(5-phospho-beta-D-ribosyl)anthranilate = 1-(2-carboxyphenylamino)-1-deoxy-D-ribulose 5-phosphate. It functions in the pathway amino-acid biosynthesis; L-tryptophan biosynthesis; L-tryptophan from chorismate: step 3/5. The chain is N-(5'-phosphoribosyl)anthranilate isomerase from Desulfitobacterium hafniense (strain DSM 10664 / DCB-2).